A 389-amino-acid polypeptide reads, in one-letter code: 23S rRNA (uracil(747)-C(5))-methyltransferase RlmC (389 aa).

[4Fe-4S] cluster is bound by residues cysteine 5, cysteine 13, cysteine 16, and cysteine 94. S-adenosyl-L-methionine contacts are provided by glutamine 219, phenylalanine 248, glutamate 275, and asparagine 321. The active-site Nucleophile is cysteine 348.

This sequence belongs to the class I-like SAM-binding methyltransferase superfamily. RNA M5U methyltransferase family. RlmC subfamily.

The catalysed reaction is uridine(747) in 23S rRNA + S-adenosyl-L-methionine = 5-methyluridine(747) in 23S rRNA + S-adenosyl-L-homocysteine + H(+). Functionally, catalyzes the formation of 5-methyl-uridine at position 747 (m5U747) in 23S rRNA. This Mannheimia succiniciproducens (strain KCTC 0769BP / MBEL55E) protein is 23S rRNA (uracil(747)-C(5))-methyltransferase RlmC.